The following is a 73-amino-acid chain: Large ribosomal subunit protein bL31 (73 aa).

The protein belongs to the bacterial ribosomal protein bL31 family. Type A subfamily. As to quaternary structure, part of the 50S ribosomal subunit.

Binds the 23S rRNA. This is Large ribosomal subunit protein bL31 from Bartonella henselae (strain ATCC 49882 / DSM 28221 / CCUG 30454 / Houston 1) (Rochalimaea henselae).